The following is a 436-amino-acid chain: Nicotinate phosphoribosyltransferase (436 aa).

A Phosphohistidine; by autocatalysis modification is found at His231.

It belongs to the NAPRTase family. Post-translationally, transiently phosphorylated on a His residue during the reaction cycle. Phosphorylation strongly increases the affinity for substrates and increases the rate of nicotinate D-ribonucleotide production. Dephosphorylation regenerates the low-affinity form of the enzyme, leading to product release.

The enzyme catalyses nicotinate + 5-phospho-alpha-D-ribose 1-diphosphate + ATP + H2O = nicotinate beta-D-ribonucleotide + ADP + phosphate + diphosphate. It participates in cofactor biosynthesis; NAD(+) biosynthesis; nicotinate D-ribonucleotide from nicotinate: step 1/1. In terms of biological role, catalyzes the synthesis of beta-nicotinate D-ribonucleotide from nicotinate and 5-phospho-D-ribose 1-phosphate at the expense of ATP. This Vibrio parahaemolyticus serotype O3:K6 (strain RIMD 2210633) protein is Nicotinate phosphoribosyltransferase.